The chain runs to 132 residues: Agouti-signaling protein (132 aa).

A signal peptide spans 1 to 22 (MDVTRLLLATLLVFLCFFTAYS). Asn39 carries an N-linked (GlcNAc...) asparagine glycan. The tract at residues 61 to 87 (QISRKEAEKKRSSKKEASMKKVARPRT) is disordered. The segment covering 63-79 (SRKEAEKKRSSKKEASM) has biased composition (basic and acidic residues). 5 disulfide bridges follow: Cys93–Cys108, Cys100–Cys114, Cys107–Cys125, Cys111–Cys132, and Cys116–Cys123. The 40-residue stretch at 93-132 (CVATRDSCKPPAPACCDPCAFCQCRFFRSACSCRVLSLNC) folds into the Agouti domain.

The protein localises to the secreted. Involved in the regulation of melanogenesis. The binding of ASP to MC1R precludes alpha-MSH initiated signaling and thus blocks production of cAMP, leading to a down-regulation of eumelanogenesis (brown/black pigment) and thus increasing synthesis of pheomelanin (yellow/red pigment). This chain is Agouti-signaling protein (ASIP), found in Macaca hecki (Heck's macaque).